A 286-amino-acid chain; its full sequence is Phosphate import ATP-binding protein PstB (286 aa).

Positions 1 to 27 (MEPKETLRQRWPGRGRTEETGAMKKSD) are disordered. Over residues 15–27 (GRTEETGAMKKSD) the composition is skewed to basic and acidic residues. An ABC transporter domain is found at 33 to 281 (MTVEHLNMYY…PDRKETEDYV (249 aa)). Residue 65–72 (GPSGCGKS) participates in ATP binding.

Belongs to the ABC transporter superfamily. Phosphate importer (TC 3.A.1.7) family. As to quaternary structure, the complex is composed of two ATP-binding proteins (PstB), two transmembrane proteins (PstC and PstA) and a solute-binding protein (PstS).

It is found in the cell membrane. The enzyme catalyses phosphate(out) + ATP + H2O = ADP + 2 phosphate(in) + H(+). Its function is as follows. Part of the ABC transporter complex PstSACB involved in phosphate import. Responsible for energy coupling to the transport system. This Rubrobacter xylanophilus (strain DSM 9941 / JCM 11954 / NBRC 16129 / PRD-1) protein is Phosphate import ATP-binding protein PstB.